The following is a 924-amino-acid chain: Periplasmic nitrate reductase (924 aa).

Positions 1–29 form a signal peptide, tat-type signal; sequence MNRRDFIKNTAIASACGVAGLSVPSSVLA. Positions 35-91 constitute a 4Fe-4S Mo/W bis-MGD-type domain; that stretch reads WRWDKAVCRFCGTGCGILVARQDGKIVAVKGDPAAPVNRGLNCIKGYFNAKIMYGED. 4 residues coordinate [4Fe-4S] cluster: Cys42, Cys45, Cys49, and Cys77. Mo-bis(molybdopterin guanine dinucleotide) is bound by residues Lys79, Gln147, Asn172, Cys176, 209–216, Met417, Gln421, Asn527, 552–553, Lys575, Asp602, and 814–823; these read WGANMAEM, SD, and TGRVLEHWHS. A substrate-binding site is contributed by Trp890. Asn898 and Lys915 together coordinate Mo-bis(molybdopterin guanine dinucleotide).

It belongs to the prokaryotic molybdopterin-containing oxidoreductase family. NasA/NapA/NarB subfamily. Component of the periplasmic nitrate reductase NapAB complex composed of NapA and NapB. Requires [4Fe-4S] cluster as cofactor. Mo-bis(molybdopterin guanine dinucleotide) serves as cofactor. Post-translationally, predicted to be exported by the Tat system. The position of the signal peptide cleavage has not been experimentally proven.

The protein localises to the periplasm. It carries out the reaction 2 Fe(II)-[cytochrome] + nitrate + 2 H(+) = 2 Fe(III)-[cytochrome] + nitrite + H2O. Functionally, catalytic subunit of the periplasmic nitrate reductase complex NapAB. Receives electrons from NapB and catalyzes the reduction of nitrate to nitrite. In Campylobacter lari (strain RM2100 / D67 / ATCC BAA-1060), this protein is Periplasmic nitrate reductase.